The primary structure comprises 963 residues: Ubiquitin carboxyl-terminal hydrolase 4 (963 aa).

In terms of domain architecture, DUSP spans 11 to 122; the sequence is PDAETQKSEL…GQQPIVRKVV (112 aa). Positions 27–216 are necessary for interaction with SART3; sequence TLQRGAQWYL…LYLGQVLVIE (190 aa). A Nuclear export signal motif is present at residues 133-141; the sequence is VEVYLLELK. Positions 142–226 constitute a Ubiquitin-like 1 domain; the sequence is LCENSDPTNV…PQNEDGTWPR (85 aa). Residues 220-255 form a disordered region; sequence EDGTWPRQTLQSKSSTAPSRNFTTSPKSSASPYSSV. Positions 225 to 243 are enriched in polar residues; the sequence is PRQTLQSKSSTAPSRNFTT. The segment at 229 to 295 is required for USP4 activation by providing conformational flexibility between the DUSP and catalytic domains; that stretch reads LQSKSSTAPS…SYNCQEPPSS (67 aa). Over residues 244–255 the composition is skewed to low complexity; that stretch reads SPKSSASPYSSV. The USP domain occupies 302–923; it reads CGLGNLGNTC…AAYVLFYQRR (622 aa). The active-site Nucleophile is Cys311. Positions 384–386 are regulates ubiquitin dissociation; it reads PQF. Residues 405 to 407 are necessary for interaction with RBL2; it reads LHE. Residue Ser445 is modified to Phosphoserine. A necessary for interaction with RB1 and RBL2 region spans residues 459–463; the sequence is LVCPE. Residues Cys461 and Cys464 each contribute to the Zn(2+) site. Residues 483 to 571 form the Ubiquitin-like 2 domain; sequence LKKDRVMEVF…IFVYEVCSTS (89 aa). The interacts with DUSP and ubiquitin-like 1 domains and is required for USP4 activation stretch occupies residues 485-775; sequence KDRVMEVFLV…LQPQKKKKTT (291 aa). The interval 637–698 is disordered; the sequence is DEFGSSPLEP…PSETTQKKIK (62 aa). A Phosphoserine modification is found at Ser655. Residues 657–666 show a composition bias toward acidic residues; the sequence is EGEDEEEMEH. Residues Ser675 and Ser680 each carry the phosphoserine modification. The Nuclear localization signal signature appears at 767-772; the sequence is QPQKKK. Cys799 and Cys802 together coordinate Zn(2+). His881 (proton acceptor) is an active-site residue. The interval 928-963 is disordered; the sequence is YKTPSLSSSGSSDGGTRPSSSQQGLGDDEACSMDTN. A compositionally biased stretch (low complexity) spans 932 to 948; sequence SLSSSGSSDGGTRPSSS. Residues 953 to 963 show a composition bias toward acidic residues; sequence GDDEACSMDTN.

The protein belongs to the peptidase C19 family. USP4 subfamily. In terms of assembly, interacts with RB1 (both dephosphorylated and hypophosphorylated forms). Interacts with RBL1 and RBL2. Interacts with ADORA2A (via cytoplasmic C-terminus); the interaction is direct. Interacts with SART3; recruits USP4 to its substrate PRPF3. In terms of processing, phosphorylated at Ser-445 by PKB/AKT1 in response to EGF stimulus, promoting its ability deubiquitinate RHEB. Monoubiquitinated by TRIM21. Ubiquitination does not lead to its proteasomal degradation. Autodeubiquitinated.

The protein localises to the cytoplasm. Its subcellular location is the nucleus. The enzyme catalyses Thiol-dependent hydrolysis of ester, thioester, amide, peptide and isopeptide bonds formed by the C-terminal Gly of ubiquitin (a 76-residue protein attached to proteins as an intracellular targeting signal).. Its activity is regulated as follows. The completion of the deubiquitinase reaction is mediated by the DUSP and ubiquitin-like 1 domains which promotes the release of ubiquitin from the catalytic site enabling subsequent reactions to occur. In terms of biological role, deubiquitinating enzyme that removes conjugated ubiquitin from target proteins. Deubiquitinates PDPK1. Deubiquitinates TRIM21. Deubiquitinates receptor ADORA2A which increases the amount of functional receptor at the cell surface. Deubiquitinates HAS2. Deubiquitinates RHEB in response to EGF signaling, promoting mTORC1 signaling. May regulate mRNA splicing through deubiquitination of the U4 spliceosomal protein PRPF3. This may prevent its recognition by the U5 component PRPF8 thereby destabilizing interactions within the U4/U6.U5 snRNP. May also play a role in the regulation of quality control in the ER. The protein is Ubiquitin carboxyl-terminal hydrolase 4 (USP4) of Pongo abelii (Sumatran orangutan).